A 302-amino-acid polypeptide reads, in one-letter code: Methionyl-tRNA formyltransferase (302 aa).

103 to 106 (SLLP) serves as a coordination point for (6S)-5,6,7,8-tetrahydrofolate.

Belongs to the Fmt family.

It carries out the reaction L-methionyl-tRNA(fMet) + (6R)-10-formyltetrahydrofolate = N-formyl-L-methionyl-tRNA(fMet) + (6S)-5,6,7,8-tetrahydrofolate + H(+). Attaches a formyl group to the free amino group of methionyl-tRNA(fMet). The formyl group appears to play a dual role in the initiator identity of N-formylmethionyl-tRNA by promoting its recognition by IF2 and preventing the misappropriation of this tRNA by the elongation apparatus. The protein is Methionyl-tRNA formyltransferase of Pseudothermotoga lettingae (strain ATCC BAA-301 / DSM 14385 / NBRC 107922 / TMO) (Thermotoga lettingae).